We begin with the raw amino-acid sequence, 149 residues long: MADQLTDDQISEFKEAFSLFDKDGDGCITTKELGTVMRSLGQNPTEAELQDMINEVDADGNGTIDFPEPLNLMARKMKDTDSEEELKEAFRVFDKDQNGFISAAELRHVMTNLGEKLTDEEVDEMIREADVDGDGQINYEEFVKVMMAK.

Ala2 bears the N-acetylalanine mark. 4 EF-hand domains span residues 8 to 43 (DQISEFKEAFSLFDKDGDGCITTKELGTVMRSLGQN), 44 to 79 (PTEAELQDMINEVDADGNGTIDFPEPLNLMARKMKD), 81 to 116 (DSEEELKEAFRVFDKDQNGFISAAELRHVMTNLGEK), and 117 to 149 (LTDEEVDEMIREADVDGDGQINYEEFVKVMMAK). Ca(2+) contacts are provided by Asp21, Asp23, Asp25, Cys27, Glu32, Asp57, Asp59, Asn61, Thr63, Glu68, Asp94, Asp96, Asn98, and Glu105. Residue Lys116 is modified to N6,N6,N6-trimethyllysine. Residues Asp130, Asp132, Asp134, Gln136, and Glu141 each coordinate Ca(2+).

Belongs to the calmodulin family.

In terms of biological role, calmodulin mediates the control of a large number of enzymes, ion channels and other proteins by Ca(2+). Among the enzymes to be stimulated by the calmodulin-Ca(2+) complex are a number of protein kinases and phosphatases. The protein is Calmodulin (CAM) of Malus domestica (Apple).